The following is a 284-amino-acid chain: Polyamine aminopropyltransferase (284 aa).

The region spanning 6-242 (KGWFTEVCKE…GWWSATLAGH (237 aa)) is the PABS domain. Q36 contributes to the S-methyl-5'-thioadenosine binding site. Positions 67 and 91 each coordinate spermidine. S-methyl-5'-thioadenosine is bound by residues E111 and 142 to 143 (DG). The active-site Proton acceptor is D161. 161–164 (DSTD) is a spermidine binding site.

Belongs to the spermidine/spermine synthase family. In terms of assembly, homodimer or homotetramer.

It localises to the cytoplasm. It catalyses the reaction S-adenosyl 3-(methylsulfanyl)propylamine + putrescine = S-methyl-5'-thioadenosine + spermidine + H(+). The protein operates within amine and polyamine biosynthesis; spermidine biosynthesis; spermidine from putrescine: step 1/1. Catalyzes the irreversible transfer of a propylamine group from the amino donor S-adenosylmethioninamine (decarboxy-AdoMet) to putrescine (1,4-diaminobutane) to yield spermidine. This chain is Polyamine aminopropyltransferase, found in Nitrosococcus oceani (strain ATCC 19707 / BCRC 17464 / JCM 30415 / NCIMB 11848 / C-107).